Consider the following 172-residue polypeptide: L-methionine sulfoximine/L-methionine sulfone acetyltransferase (172 aa).

The N-acetyltransferase domain occupies 3 to 166; it reads ASIRDAGVAD…DLTFMQLNLD (164 aa). Substrate-binding positions include 75 to 77 and 85 to 87; these read RPF and EHS. Residues 88 to 90, 96 to 101, and asparagine 127 contribute to the acetyl-CoA site; these read VYV and GKGLGV.

As to quaternary structure, homodimer.

The catalysed reaction is L-methionine sulfoximine + acetyl-CoA = N-acetyl-L-methionine sulfoximine + CoA + H(+). It carries out the reaction L-methionine sulfone + acetyl-CoA = N-acetyl-L-methionine sulfone + CoA + H(+). Functionally, plays a role in the resistance against the toxic effects of L-methionine sulfoximine (MSX), a rare amino acid, which inhibits glutamine synthetase (GlnA). Catalyzes the acetylation of L-methionine sulfoximine (MSX). It can also use L-methionine sulfone (MSO). The polypeptide is L-methionine sulfoximine/L-methionine sulfone acetyltransferase (Pseudomonas paraeruginosa (strain DSM 24068 / PA7) (Pseudomonas aeruginosa (strain PA7))).